Here is a 592-residue protein sequence, read N- to C-terminus: Vacuolin-B (592 aa).

The span at 1–30 shows a compositional bias: polar residues; sequence MIESSSFMKKTSSENSIGSRSNIHEASTFS. A disordered region spans residues 1–35; sequence MIESSSFMKKTSSENSIGSRSNIHEASTFSSEHEN. A coiled-coil region spans residues 480–534; sequence KTTEARLKAETDNIALEQKGKAIIAEAQAKLESAQKQAQALLITAEAQKKVQEMQ. Positions 491-555 are oligomerization domain; the sequence is DNIALEQKGK…EIELAKIKSE (65 aa).

The protein belongs to the vacuolin family. As to quaternary structure, homotrimer.

The protein localises to the endosome membrane. It is found in the lysosome membrane. Functionally, negative regulator of late steps of the endocytic pathway. The sequence is that of Vacuolin-B (vacB) from Dictyostelium discoideum (Social amoeba).